A 134-amino-acid chain; its full sequence is RuBisCO chaperone RbcX (134 aa).

The segment at 97–134 (SNGNHRRSLLERLTQVDSSSTDQTEPNPGESDTSEDSE) is disordered. The span at 111 to 122 (QVDSSSTDQTEP) shows a compositional bias: polar residues.

Belongs to the RbcX family. Homodimer (RbcX2). Interacts with the exposed C-terminal peptide of RbcL ('Glu-459-Asp-468'); binds 2 RbcL peptides per RbcX2, stapling them into an RbcL2 dimer. A slightly longer peptide binds with a higher affinity, but no long-term stable interaction with RbcL is detected. Contacts a second RbcL monomer via its peripheral polar surface.

Its subcellular location is the carboxysome. It localises to the cytoplasm. An RbcL-specific chaperone. Required for assembly of the RbcL8 core, acting downstream of the major chaperonin (GroEL-GroES). Acts on newly folded RbcL, has a transient dynamic interaction with RbcL and is eventually displaced by RbcS. The central cleft of the RbcX homodimer (RbcX2) binds the C-terminus of an RbcL monomer, stabilizing the C-terminus and probably preventing its reassociation with chaperonin GroEL-ES. At the same time the peripheral region of RbcX2 binds a second RbcL monomer, bridging the RbcL homodimers in the correct orientation. The RbcX2(2)-bound RbcL dimers then assemble into the RbcL8 core (RbcL8-(RbcX2)8). RbcS binding triggers the release of RbcX2. Required for optimal reconstitution of RuBisCO into its RbcL8S8 holoenzyme form upon expression of rbcL-rbcS subunits in E.coli, and probably also in situ. A frameshift mutation that replaces half the protein reduces accumulation of both RbcL and RbcS subunits and halves activity of RuBisCO in situ and in E.coli. The chain is RuBisCO chaperone RbcX from Picosynechococcus sp. (strain ATCC 27264 / PCC 7002 / PR-6) (Agmenellum quadruplicatum).